A 710-amino-acid polypeptide reads, in one-letter code: Adenylosuccinate synthetase (710 aa).

Disordered regions lie at residues 1–51 (MPVR…PVPQ) and 84–111 (DEPPHGSQKSLSVAPYTANASSSSGRSK). Composition is skewed to polar residues over residues 10-27 (YNNSSPGVSNALSPSTTA) and 101-111 (ANASSSSGRSK). Residues 180-186 (GDEGKGK) and 210-212 (GHT) each bind GTP. Aspartate 181 acts as the Proton acceptor in catalysis. Residues aspartate 181 and glycine 210 each coordinate Mg(2+). IMP contacts are provided by residues 181-184 (DEGK), 208-211 (NAGH), threonine 295, lysine 309, glutamine 421, threonine 437, and lysine 567. Histidine 211 acts as the Proton donor in catalysis. 563-569 (AVTKKPR) lines the substrate pocket. GTP contacts are provided by residues arginine 569 and 697 to 699 (GNG).

This sequence belongs to the adenylosuccinate synthetase family. As to quaternary structure, homodimer. The cofactor is Mg(2+).

It is found in the cytoplasm. It catalyses the reaction IMP + L-aspartate + GTP = N(6)-(1,2-dicarboxyethyl)-AMP + GDP + phosphate + 2 H(+). It functions in the pathway purine metabolism; AMP biosynthesis via de novo pathway; AMP from IMP: step 1/2. In terms of biological role, plays an important role in the salvage pathway for purine nucleotide biosynthesis. Catalyzes the first committed step in the biosynthesis of AMP from IMP. The sequence is that of Adenylosuccinate synthetase from Leishmania infantum.